Here is a 256-residue protein sequence, read N- to C-terminus: tRNA pseudouridine synthase A (256 aa).

The active-site Nucleophile is the Asp-55. Tyr-113 is a binding site for substrate.

Belongs to the tRNA pseudouridine synthase TruA family. In terms of assembly, homodimer.

The enzyme catalyses uridine(38/39/40) in tRNA = pseudouridine(38/39/40) in tRNA. Its function is as follows. Formation of pseudouridine at positions 38, 39 and 40 in the anticodon stem and loop of transfer RNAs. The polypeptide is tRNA pseudouridine synthase A (Ligilactobacillus salivarius (strain UCC118) (Lactobacillus salivarius)).